The primary structure comprises 140 residues: Ribosome-binding factor A (140 aa).

Basic and acidic residues predominate over residues 118-133 (DEAKQQKHNGKDKTDT). Residues 118 to 140 (DEAKQQKHNGKDKTDTADSEGEE) are disordered.

The protein belongs to the RbfA family. Monomer. Binds 30S ribosomal subunits, but not 50S ribosomal subunits or 70S ribosomes.

The protein localises to the cytoplasm. In terms of biological role, one of several proteins that assist in the late maturation steps of the functional core of the 30S ribosomal subunit. Associates with free 30S ribosomal subunits (but not with 30S subunits that are part of 70S ribosomes or polysomes). Required for efficient processing of 16S rRNA. May interact with the 5'-terminal helix region of 16S rRNA. The chain is Ribosome-binding factor A from Shewanella woodyi (strain ATCC 51908 / MS32).